The primary structure comprises 588 residues: Mediator of RNA polymerase II transcription subunit 26 (588 aa).

One can recognise a TFIIS N-terminal domain in the interval 10–87 (QMRDRLLQAI…RSWQKLIEPV (78 aa)). 2 disordered regions span residues 112–393 (RPEM…YTVN) and 412–441 (KLTF…PTEQ). A compositionally biased stretch (basic and acidic residues) spans 123-133 (SIHDLKNRNDI). A compositionally biased stretch (polar residues) spans 179 to 191 (PLPTNGISGSPES). A compositionally biased stretch (basic and acidic residues) spans 207-218 (SRLEPSDNEKHS). Over residues 314–325 (SPLPLAQPPTPP) the composition is skewed to pro residues. 2 positions are modified to phosphoserine: Ser435 and Ser458.

Belongs to the Mediator complex subunit 26 family. In terms of assembly, component of the Mediator complex, which is composed of MED1, MED4, MED6, MED7, MED8, MED9, MED10, MED11, MED12, MED13, MED13L, MED14, MED15, MED16, MED17, MED18, MED19, MED20, MED21, MED22, MED23, MED24, MED25, MED26, MED27, MED29, MED30, MED31, CCNC, CDK8 and CDC2L6/CDK11. The MED12, MED13, CCNC and CDK8 subunits form a distinct module termed the CDK8 module. Mediator containing the CDK8 module is less active than Mediator lacking this module in supporting transcriptional activation. Individual preparations of the Mediator complex lacking one or more distinct subunits have been variously termed ARC, CRSP, DRIP, PC2, SMCC and TRAP. Interacts with CEBPB (when not methylated).

The protein resides in the nucleus. In terms of biological role, component of the Mediator complex, a coactivator involved in the regulated transcription of nearly all RNA polymerase II-dependent genes. Mediator functions as a bridge to convey information from gene-specific regulatory proteins to the basal RNA polymerase II transcription machinery. Mediator is recruited to promoters by direct interactions with regulatory proteins and serves as a scaffold for the assembly of a functional pre-initiation complex with RNA polymerase II and the general transcription factors. In Mus musculus (Mouse), this protein is Mediator of RNA polymerase II transcription subunit 26 (Med26).